The following is a 496-amino-acid chain: UDP-glycosyltransferase 84A2 (496 aa).

His-23 (proton acceptor) is an active-site residue. Position 23 (His-23) interacts with an anthocyanidin. Residues Gln-352, His-367, Trp-370, Asn-371, Ser-372, and Glu-375 each coordinate UDP-alpha-D-glucose. An anthocyanidin is bound at residue Gly-390. The UDP-alpha-D-glucose site is built by Asp-391 and Gln-392.

It belongs to the UDP-glycosyltransferase family. In terms of tissue distribution, expressed in roots, cotyledons, leaf veins and trichomes.

The catalysed reaction is (E)-sinapate + UDP-alpha-D-glucose = 1-O-(trans-sinapoyl)-beta-D-glucose + UDP. Functionally, sinapate glucosyltransferase (SGT) required for the biosynthesis of the glucose ester sinapoylglucose and subsequently sinapoylmalate and sinapoylcholine. Is the major SGT activity in plant. Plays an important role in sinapoylation of anthocyanins. Sinapoylglucose produced by UGT84A2 is a significant source of sinapoyl moieties for anthocyanins. Indole-3-butyric acid (IBA)-specific glucosyltransferase that catalyzes the glucosylation of the auxin IBA, but not indole-3-acetic acid (IAA). May be involved in flowering regulation through IBA-mediated transcriptional repression of the auxin-response factors ARF6 and ARF8 and downstream flowering pathway genes. Can glucosylate the phytotoxic xenobiotic compound 2,4,5-trichlorophenol (TCP). This is UDP-glycosyltransferase 84A2 from Arabidopsis thaliana (Mouse-ear cress).